We begin with the raw amino-acid sequence, 215 residues long: Eukaryotic translation initiation factor 4E-1 (215 aa).

The disordered stretch occupies residues 1–35; sequence MAEDTETRPASAGAEEREEGEIADDGDGSAAAAAG. Over residues 16–27 the composition is skewed to acidic residues; it reads EREEGEIADDGD. EIF4G-binding regions lie at residues 40–43 and 50–86; these read HPLE and FDNP…NNIH. MRNA-binding positions include 58 to 63, lysine 90, and 108 to 109; these read RAVAWG and WE. A disulfide bridge connects residues cysteine 113 and cysteine 151. The segment at 134 to 143 is EIF4G-binding; sequence HTLLALIGEQ. MRNA-binding positions include 158-163 and 203-207; these read RKNQER and KRSDK.

This sequence belongs to the eukaryotic initiation factor 4E family. In terms of assembly, EIF4F is a multi-subunit complex, the composition of which varies with external and internal environmental conditions. It is composed of at least EIF4A, EIF4E and EIF4G. EIF4E is also known to interact with other partners. In higher plants two isoforms of EIF4F have been identified, named isoform EIF4F and isoform EIF(iso)4F. Isoform EIF4F has subunits p220 and p26, whereas isoform EIF(iso)4F has subunits p82 and p28. (Microbial infection) Interacts with potyvirus viral genome-linked protein (VPg); this interaction is possible in susceptible hosts but impaired in resistant plants. According to the redox status, the Cys-113-Cys-151 disulfide bridge may have a role in regulating protein function by affecting its ability to bind capped mRNA.

It is found in the nucleus. It localises to the cytoplasm. Component of the protein complex eIF4F, which is involved in the recognition of the mRNA cap, ATP-dependent unwinding of 5'-terminal secondary structure and recruitment of mRNA to the ribosome. Recognizes and binds the 7-methylguanosine-containing mRNA cap during an early step in the initiation of protein synthesis and facilitates ribosome binding by inducing the unwinding of the mRNAs secondary structures. Key component of recessive resistance to potyviruses and bymoviruses, including barley yellow mosaic virus and barley mild mosaic virus. In terms of biological role, (Microbial infection) Susceptibility host factor required for viral infection by recruiting viral RNAs to the host ribosomal complex via an interaction with viral genome-linked protein (VPg). This Hordeum vulgare subsp. vulgare (Domesticated barley) protein is Eukaryotic translation initiation factor 4E-1.